Reading from the N-terminus, the 1291-residue chain is DNA-directed RNA polymerase subunit beta' (1291 aa).

Residues cysteine 60, cysteine 62, cysteine 75, and cysteine 78 each contribute to the Zn(2+) site. 3 residues coordinate Mg(2+): aspartate 535, aspartate 537, and aspartate 539. Positions 878, 954, 961, and 964 each coordinate Zn(2+).

The protein belongs to the RNA polymerase beta' chain family. In terms of assembly, the RNAP catalytic core consists of 2 alpha, 1 beta, 1 beta' and 1 omega subunit. When a sigma factor is associated with the core the holoenzyme is formed, which can initiate transcription. Mg(2+) serves as cofactor. It depends on Zn(2+) as a cofactor.

The enzyme catalyses RNA(n) + a ribonucleoside 5'-triphosphate = RNA(n+1) + diphosphate. In terms of biological role, DNA-dependent RNA polymerase catalyzes the transcription of DNA into RNA using the four ribonucleoside triphosphates as substrates. In Thermobifida fusca (strain YX), this protein is DNA-directed RNA polymerase subunit beta'.